We begin with the raw amino-acid sequence, 216 residues long: Soluble inorganic pyrophosphatase 5 (216 aa).

The segment at 1–20 (MNGEEVKTSQPQKKLQNPTP) is disordered. Over residues 8 to 20 (TSQPQKKLQNPTP) the composition is skewed to polar residues. The substrate site is built by lysine 66 and arginine 80. Tyrosine 88 serves as the catalytic Proton donor. Residue tyrosine 92 coordinates substrate. Residues aspartate 102, aspartate 107, and aspartate 139 each contribute to the Mg(2+) site. Tyrosine 176 is a substrate binding site.

The protein belongs to the PPase family. It depends on Mg(2+) as a cofactor.

It is found in the cytoplasm. The enzyme catalyses diphosphate + H2O = 2 phosphate + H(+). The protein is Soluble inorganic pyrophosphatase 5 of Arabidopsis thaliana (Mouse-ear cress).